The following is a 537-amino-acid chain: Putative cysteine ligase BshC (537 aa).

The stretch at 422-450 forms a coiled coil; that stretch reads IEKVEGMIEQQRRLNKDLLDEVAGNQNNI.

This sequence belongs to the BshC family.

Involved in bacillithiol (BSH) biosynthesis. May catalyze the last step of the pathway, the addition of cysteine to glucosamine malate (GlcN-Mal) to generate BSH. The polypeptide is Putative cysteine ligase BshC (Staphylococcus aureus (strain Mu3 / ATCC 700698)).